The chain runs to 147 residues: MGFTADQEALVNSSWESFKQNLPGYSVFFYTTILEKAPAAKGMFSFLKDSAGVQDSPQLQAHAEKVFGMVRDSAVQLRATGEVVLGDATLGSIHIQKGVVDPHFVVVKEALLKTIKEAVGDKWSEELSTSWEVAYDGLASAIKKAMS.

The Globin domain occupies 2–147 (GFTADQEALV…LASAIKKAMS (146 aa)). Residues Y25 and Y30 each carry the nitrated tyrosine modification. S45 lines the heme b pocket. S45 is modified (phosphoserine). H62 serves as a coordination point for O2. Heme b-binding residues include K65, H94, and K97. Y135 carries the nitrated tyrosine modification.

The protein belongs to the plant globin family. As to quaternary structure, monomer. In terms of processing, nitrated in effective nodules and particularly in hypoxic conditions; this mechanism may play a protective role in the symbiosis by buffering toxic peroxynitrite NO(2)(-). Nitration level decrease during nodule senescence. Phosphorylation at Ser-45 disrupts the molecular environment of its porphyrin ring oxygen binding pocket, thus leading to a reduced oxygen consumption and to the delivery of oxygen O(2) to symbiosomes. As to expression, root nodules.

It localises to the cytoplasm. The protein localises to the cytosol. The protein resides in the nucleus. In terms of biological role, leghemoglobin that reversibly binds oxygen O(2) through a pentacoordinated heme iron. In root nodules, facilitates the diffusion of oxygen to the bacteroids while preventing the bacterial nitrogenase from being inactivated by buffering dioxygen, nitric oxide and carbon monoxide, and promoting the formation of reactive oxygen species (ROS, e.g. H(2)O(2)). This role is essential for symbiotic nitrogen fixation (SNF). The chain is Leghemoglobin (LB3) from Medicago sativa (Alfalfa).